We begin with the raw amino-acid sequence, 546 residues long: CTP synthase (546 aa).

The interval 1–269 (MNSNTKIIFV…DAKLVELLNL (269 aa)) is amidoligase domain. Position 16 (S16) interacts with CTP. S16 is a UTP binding site. ATP is bound by residues 17 to 22 (SLGKGV) and D74. Mg(2+) contacts are provided by D74 and E143. Residues 150-152 (DIE), 190-195 (KTKPTQ), and K226 each bind CTP. UTP-binding positions include 190–195 (KTKPTQ) and K226. Residues 294–546 (TIAMVGKYVS…IQAAIENSNN (253 aa)) form the Glutamine amidotransferase type-1 domain. G356 contacts L-glutamine. C383 (nucleophile; for glutamine hydrolysis) is an active-site residue. L-glutamine contacts are provided by residues 384–387 (LGMQ), E407, and R474. Catalysis depends on residues H519 and E521.

It belongs to the CTP synthase family. In terms of assembly, homotetramer.

It catalyses the reaction UTP + L-glutamine + ATP + H2O = CTP + L-glutamate + ADP + phosphate + 2 H(+). It carries out the reaction L-glutamine + H2O = L-glutamate + NH4(+). The enzyme catalyses UTP + NH4(+) + ATP = CTP + ADP + phosphate + 2 H(+). It participates in pyrimidine metabolism; CTP biosynthesis via de novo pathway; CTP from UDP: step 2/2. With respect to regulation, allosterically activated by GTP, when glutamine is the substrate; GTP has no effect on the reaction when ammonia is the substrate. The allosteric effector GTP functions by stabilizing the protein conformation that binds the tetrahedral intermediate(s) formed during glutamine hydrolysis. Inhibited by the product CTP, via allosteric rather than competitive inhibition. Functionally, catalyzes the ATP-dependent amination of UTP to CTP with either L-glutamine or ammonia as the source of nitrogen. Regulates intracellular CTP levels through interactions with the four ribonucleotide triphosphates. The polypeptide is CTP synthase (Francisella tularensis subsp. tularensis (strain FSC 198)).